We begin with the raw amino-acid sequence, 124 residues long: Fluoride-specific ion channel FluC (124 aa).

Transmembrane regions (helical) follow at residues 20–40 (LLSIFMIQVFGSSFPFGTLLV), 60–80 (ISPEIKALIGIGLLGALTTFS), and 102–122 (VLLNVTLCLFMVYLGQQLIFS). Residues Gly74 and Thr77 each coordinate Na(+).

This sequence belongs to the fluoride channel Fluc/FEX (TC 1.A.43) family.

The protein resides in the cell inner membrane. The catalysed reaction is fluoride(in) = fluoride(out). With respect to regulation, na(+) is not transported, but it plays an essential structural role and its presence is essential for fluoride channel function. Fluoride-specific ion channel. Important for reducing fluoride concentration in the cell, thus reducing its toxicity. The protein is Fluoride-specific ion channel FluC of Shewanella frigidimarina (strain NCIMB 400).